Here is a 357-residue protein sequence, read N- to C-terminus: Protein FAM118A (357 aa).

Position 1 is an N-acetylmethionine (M1). The helical transmembrane segment at 30–50 (LLLVIGTGVSAAVAPGIPALC) threads the bilayer. S311 carries the phosphoserine modification.

This sequence belongs to the FAM118 family.

The protein resides in the membrane. This is Protein FAM118A (FAM118A) from Homo sapiens (Human).